An 80-amino-acid polypeptide reads, in one-letter code: Large ribosomal subunit protein bL31B (80 aa).

Belongs to the bacterial ribosomal protein bL31 family. Type B subfamily. As to quaternary structure, part of the 50S ribosomal subunit.

In Methylobacillus flagellatus (strain ATCC 51484 / DSM 6875 / VKM B-1610 / KT), this protein is Large ribosomal subunit protein bL31B.